We begin with the raw amino-acid sequence, 161 residues long: Allophycocyanin alpha chain (161 aa).

Position 71 is an N4-methylasparagine (asparagine 71). Residue cysteine 81 coordinates (2R,3E)-phycocyanobilin.

The protein belongs to the phycobiliprotein family. In terms of assembly, heterodimer of an alpha and a beta chain. Contains one covalently linked phycocyanobilin chromophore.

The protein resides in the plastid. The protein localises to the chloroplast thylakoid membrane. Its function is as follows. Light-harvesting photosynthetic bile pigment-protein from the phycobiliprotein complex. Allophycocyanin has a maximum absorption at approximately 650 nanometers. This Galdieria sulphuraria (Red alga) protein is Allophycocyanin alpha chain (apcA).